A 117-amino-acid polypeptide reads, in one-letter code: Ribonuclease P protein component (117 aa).

This sequence belongs to the RnpA family. In terms of assembly, consists of a catalytic RNA component (M1 or rnpB) and a protein subunit.

The catalysed reaction is Endonucleolytic cleavage of RNA, removing 5'-extranucleotides from tRNA precursor.. Functionally, RNaseP catalyzes the removal of the 5'-leader sequence from pre-tRNA to produce the mature 5'-terminus. It can also cleave other RNA substrates such as 4.5S RNA. The protein component plays an auxiliary but essential role in vivo by binding to the 5'-leader sequence and broadening the substrate specificity of the ribozyme. This Lactococcus lactis subsp. lactis (strain IL1403) (Streptococcus lactis) protein is Ribonuclease P protein component.